Consider the following 65-residue polypeptide: MITSIVNLCQILLVQRVTSVWRYPVRNIKPTNIEKFIHGGILYAAFLWLFYQPHICDGAFSIFNI.

This is an uncharacterized protein from Vaccinia virus (strain Copenhagen) (VACV).